The sequence spans 394 residues: Chorismate synthase (394 aa).

R48 is an NADP(+) binding site. The segment at 52–90 (QSMITTSRGEPDEVSIQSGLQDGYTTGTPIGMTIENKDA) is disordered. Over residues 66–79 (SIQSGLQDGYTTGT) the composition is skewed to polar residues. Residues 125–127 (RSS), G297, 312–316 (HAPTS), and R339 contribute to the FMN site.

The protein belongs to the chorismate synthase family. Requires FMNH2 as cofactor.

It catalyses the reaction 5-O-(1-carboxyvinyl)-3-phosphoshikimate = chorismate + phosphate. Its pathway is metabolic intermediate biosynthesis; chorismate biosynthesis; chorismate from D-erythrose 4-phosphate and phosphoenolpyruvate: step 7/7. Functionally, catalyzes the anti-1,4-elimination of the C-3 phosphate and the C-6 proR hydrogen from 5-enolpyruvylshikimate-3-phosphate (EPSP) to yield chorismate, which is the branch point compound that serves as the starting substrate for the three terminal pathways of aromatic amino acid biosynthesis. This reaction introduces a second double bond into the aromatic ring system. This chain is Chorismate synthase, found in Halobacterium salinarum (strain ATCC 700922 / JCM 11081 / NRC-1) (Halobacterium halobium).